A 103-amino-acid chain; its full sequence is NADH-quinone oxidoreductase subunit K (103 aa).

A run of 3 helical transmembrane segments spans residues leucine 4–alanine 24, isoleucine 28–threonine 48, and methionine 64–phenylalanine 84.

This sequence belongs to the complex I subunit 4L family. NDH-1 is composed of 14 different subunits. Subunits NuoA, H, J, K, L, M, N constitute the membrane sector of the complex.

The protein resides in the cell inner membrane. It carries out the reaction a quinone + NADH + 5 H(+)(in) = a quinol + NAD(+) + 4 H(+)(out). In terms of biological role, NDH-1 shuttles electrons from NADH, via FMN and iron-sulfur (Fe-S) centers, to quinones in the respiratory chain. The immediate electron acceptor for the enzyme in this species is believed to be ubiquinone. Couples the redox reaction to proton translocation (for every two electrons transferred, four hydrogen ions are translocated across the cytoplasmic membrane), and thus conserves the redox energy in a proton gradient. The polypeptide is NADH-quinone oxidoreductase subunit K (Aliarcobacter butzleri (strain RM4018) (Arcobacter butzleri)).